The following is a 121-amino-acid chain: Large ribosomal subunit protein uL18 (121 aa).

It belongs to the universal ribosomal protein uL18 family. Part of the 50S ribosomal subunit; part of the 5S rRNA/L5/L18/L25 subcomplex. Contacts the 5S and 23S rRNAs.

In terms of biological role, this is one of the proteins that bind and probably mediate the attachment of the 5S RNA into the large ribosomal subunit, where it forms part of the central protuberance. The protein is Large ribosomal subunit protein uL18 of Desulfotalea psychrophila (strain LSv54 / DSM 12343).